We begin with the raw amino-acid sequence, 772 residues long: Endoplasmic reticulum membrane sensor NFE2L1 (772 aa).

The helical; Signal-anchor for type II membrane protein transmembrane segment at 7–24 threads the bilayer; the sequence is YLTEGLLQFTILLSLIGV. The segment at 108-148 is disordered; that stretch reads DPEGSVSGSQPNSGLALESSSGLQDVTGPDNGVRESETEQG. The span at 113–131 shows a compositional bias: polar residues; that stretch reads VSGSQPNSGLALESSSGLQ. Positions 191–199 are cholesterol recognition/amino acid consensus (CRAC) region; that stretch reads VFDYSHRQK. The N-linked (GlcNAc...) asparagine glycan is linked to asparagine 348. The CPD stretch occupies residues 379–383; that stretch reads SPEVE. Asparagine 412 and asparagine 423 each carry an N-linked (GlcNAc...) asparagine glycan. The tract at residues 470–532 is disordered; sequence EEEFDSDSGL…AVGYSSDSET (63 aa). A Destruction motif motif is present at residues 476–480; sequence DSGLS. The segment covering 476–523 has biased composition (low complexity); sequence DSGLSLDSSHSPSSLSSSEGSSSSSSSSSSSSSSASSSASSSFSEEGA. Serine 528 carries the phosphoserine; by CK2 modification. Serine 599 carries the post-translational modification Phosphoserine; by PKA. In terms of domain architecture, bZIP spans 654 to 717; it reads LIRDIRRRGK…RQMKQKVQSL (64 aa). The interval 656–675 is basic motif; the sequence is RDIRRRGKNKMAAQNCRKRK. The segment at 682–696 is leucine-zipper; the sequence is LERDVEDLQRDKARL. The segment at 753 to 772 is disordered; it reads RTMADQQARRQERKPKDRRK. The Nuclear localization signal motif lies at 761–768; the sequence is RRQERKPK. A compositionally biased stretch (basic residues) spans 763-772; it reads QERKPKDRRK.

This sequence belongs to the bZIP family. CNC subfamily. In terms of assembly, interacts with KEAP1. Interacts (via CPD region) with FBXW7; leading to its ubiquitination and degradation. Interacts with SYVN1/HRD1; leading to its ubiquitination and degradation. Interacts (when ubiquitinated) with DDI2; leading to its cleavage. As to quaternary structure, interacts (via the bZIP domain) with small MAF protein (MAFF, MAFG or MAFK); required for binding to antioxidant response elements (AREs) on DNA. Interacts (via Destruction motif) with BTRC; leading to its ubiquitination and degradation. Interacts with CEBPB; the heterodimer represses expression of DSPP during odontoblast differentiation. Interacts with MOTS-c, a peptide produced by the mitochondrially encoded 12S rRNA MT-RNR1. Cleaved at Leu-104 by the aspartyl protease DDI2 following retrotranslocation, releasing the protein from the endoplasmic reticulum membrane and forming the transcription factor NRF1 that translocates into the nucleus. Ubiquitination is prerequisite for cleavage by aspartyl protease DDI2. Post-translationally, N-glycosylated in normal conditions, when it has a single-pass type II membrane protein topology, with the DNA-binding domain facing the endoplasmic reticulum lumen. Deglycosylated during retrotranslocation to the cytosolic side of the membrane, to have a single-pass type III membrane protein topology with the major part of the protein facing the cytosol. In terms of processing, ubiquitinated by the SCF(FBXW7) complex and SYVN1/HRD1, leading to its degradation by the proteasome. Ubiquitinated during retrotranslocation to the cytosolic side of the membrane: ubiquitination does not lead to degradation and is required for processing by the aspartyl protease DDI2 and subsequent release from the endoplasmic reticulum membrane. Phosphorylation by CK2 at Ser-528 inhibits transcription factor activity, possibly by affecting DNA-binding activity. Phosphorylation at Ser-599 is required for interaction with CEBPB. Post-translationally, ubiquitinated by the SCF(BTRC) complex in the nucleus, leading to its degradation by the proteasome.

The protein localises to the endoplasmic reticulum membrane. It is found in the nucleus. Functionally, endoplasmic reticulum membrane sensor that translocates into the nucleus in response to various stresses to act as a transcription factor. Constitutes a precursor of the transcription factor NRF1. Able to detect various cellular stresses, such as cholesterol excess, oxidative stress or proteasome inhibition. In response to stress, it is released from the endoplasmic reticulum membrane following cleavage by the protease DDI2 and translocates into the nucleus to form the transcription factor NRF1. Acts as a key sensor of cholesterol excess: in excess cholesterol conditions, the endoplasmic reticulum membrane form of the protein directly binds cholesterol via its CRAC motif, preventing cleavage and release of the transcription factor NRF1, thereby allowing expression of genes promoting cholesterol removal, such as CD36. Involved in proteasome homeostasis: in response to proteasome inhibition, it is released from the endoplasmic reticulum membrane, translocates to the nucleus and activates expression of genes encoding proteasome subunits. In terms of biological role, CNC-type bZIP family transcription factor that translocates to the nucleus and regulates expression of target genes in response to various stresses. Heterodimerizes with small-Maf proteins (MAFF, MAFG or MAFK) and binds DNA motifs including the antioxidant response elements (AREs), which regulate expression of genes involved in oxidative stress response. Activates or represses expression of target genes, depending on the context. Plays a key role in cholesterol homeostasis by acting as a sensor of cholesterol excess: in low cholesterol conditions, translocates into the nucleus and represses expression of genes involved in defense against cholesterol excess, such as CD36. In excess cholesterol conditions, the endoplasmic reticulum membrane form of the protein directly binds cholesterol via its CRAC motif, preventing cleavage and release of the transcription factor NRF1, thereby allowing expression of genes promoting cholesterol removal. Critical for redox balance in response to oxidative stress: acts by binding the AREs motifs on promoters and mediating activation of oxidative stress response genes, such as GCLC, GCLM, GSS, MT1 and MT2. Plays an essential role during fetal liver hematopoiesis: probably has a protective function against oxidative stress and is involved in lipid homeostasis in the liver. Involved in proteasome homeostasis: in response to proteasome inhibition, mediates the 'bounce-back' of proteasome subunits by translocating into the nucleus and activating expression of genes encoding proteasome subunits. Also involved in regulating glucose flux. Together with CEBPB; represses expression of DSPP during odontoblast differentiation. In response to ascorbic acid induction, activates expression of SP7/Osterix in osteoblasts. The protein is Endoplasmic reticulum membrane sensor NFE2L1 of Pongo abelii (Sumatran orangutan).